We begin with the raw amino-acid sequence, 335 residues long: Phospho-N-acetylmuramoyl-pentapeptide-transferase (335 aa).

The next 9 helical transmembrane spans lie at 2–22 (PPLF…LILV), 55–75 (IPTA…LLLL), 77–97 (CNLW…ALGW), 118–137 (FFIQ…IAYG), 153–173 (LPHC…AIVG), 193–213 (VIAC…WAFI), 238–258 (IFMG…CAVL), 263–283 (FMLL…ILQV), and 313–333 (VVRN…FAVF).

This sequence belongs to the glycosyltransferase 4 family. MraY subfamily. Mg(2+) is required as a cofactor.

It localises to the cell inner membrane. The enzyme catalyses UDP-N-acetyl-alpha-D-muramoyl-L-alanyl-gamma-D-glutamyl-meso-2,6-diaminopimeloyl-D-alanyl-D-alanine + di-trans,octa-cis-undecaprenyl phosphate = di-trans,octa-cis-undecaprenyl diphospho-N-acetyl-alpha-D-muramoyl-L-alanyl-D-glutamyl-meso-2,6-diaminopimeloyl-D-alanyl-D-alanine + UMP. The protein operates within cell wall biogenesis; peptidoglycan biosynthesis. Functionally, catalyzes the initial step of the lipid cycle reactions in the biosynthesis of the cell wall peptidoglycan: transfers peptidoglycan precursor phospho-MurNAc-pentapeptide from UDP-MurNAc-pentapeptide onto the lipid carrier undecaprenyl phosphate, yielding undecaprenyl-pyrophosphoryl-MurNAc-pentapeptide, known as lipid I. The protein is Phospho-N-acetylmuramoyl-pentapeptide-transferase of Chlamydia muridarum (strain MoPn / Nigg).